The primary structure comprises 684 residues: Probable metal-nicotianamine transporter YSL9 (684 aa).

A compositionally biased stretch (basic residues) spans 1 to 10 (MKQERRRKRQ). The interval 1–55 (MKQERRRKRQPGPPRLELVVAHPREEEMAGLDGGGDAEEGATHARGGGGAPPPWR) is disordered. A run of 14 helical transmembrane segments spans residues 58–78 (LTAR…VIVM), 82–102 (LTTG…FVVL), 130–150 (CAVA…LLGL), 174–194 (GIAW…LALV), 234–254 (VNGF…QWFY), 295–315 (LVNL…WPLI), 341–361 (FICV…IVAL), 402–422 (LAFS…PMMF), 430–450 (VVIA…GAGL), 462–482 (IALF…AGLV), 515–535 (IIAQ…TFFL), 568–588 (FSAL…FAVA), 612–632 (VPFL…LIVF), and 642–662 (AALM…LWIF).

Belongs to the YSL (TC 2.A.67.2) family.

The protein resides in the membrane. May be involved in the transport of nicotianamine-chelated metals. This is Probable metal-nicotianamine transporter YSL9 (YSL9) from Oryza sativa subsp. japonica (Rice).